A 42-amino-acid chain; its full sequence is MSNTGTTGRVPLWFVGMIVGLAALGLLGIFFYGSYTGLGSSL.

A helical membrane pass occupies residues 12 to 32 (LWFVGMIVGLAALGLLGIFFY).

This sequence belongs to the PsbJ family. As to quaternary structure, PSII is composed of 1 copy each of membrane proteins PsbA, PsbB, PsbC, PsbD, PsbE, PsbF, PsbH, PsbI, PsbJ, PsbK, PsbL, PsbM, PsbT, PsbX, PsbY, PsbZ, Psb30/Ycf12, at least 3 peripheral proteins of the oxygen-evolving complex and a large number of cofactors. It forms dimeric complexes.

The protein resides in the plastid. The protein localises to the chloroplast thylakoid membrane. One of the components of the core complex of photosystem II (PSII). PSII is a light-driven water:plastoquinone oxidoreductase that uses light energy to abstract electrons from H(2)O, generating O(2) and a proton gradient subsequently used for ATP formation. It consists of a core antenna complex that captures photons, and an electron transfer chain that converts photonic excitation into a charge separation. This is Photosystem II reaction center protein J from Nephroselmis olivacea (Green alga).